A 347-amino-acid chain; its full sequence is Bifunctional methylenetetrahydrofolate dehydrogenase/cyclohydrolase 2, mitochondrial (347 aa).

Substrate contacts are provided by residues 98–102 and 145–147; these read YVRNK and VQL. NAD(+) contacts are provided by residues 214–216 and R247; that span reads GRS. A substrate-binding site is contributed by 323-327; sequence PGGVG.

This sequence belongs to the tetrahydrofolate dehydrogenase/cyclohydrolase family. Mg(2+) serves as cofactor. In terms of tissue distribution, isoform 1, isoform 4 and isoform 5 are expressed in brain and placenta.

The protein localises to the mitochondrion inner membrane. It catalyses the reaction (6R)-5,10-methylene-5,6,7,8-tetrahydrofolate + NAD(+) = (6R)-5,10-methenyltetrahydrofolate + NADH. The enzyme catalyses (6R)-5,10-methenyltetrahydrofolate + H2O = (6R)-10-formyltetrahydrofolate + H(+). The catalysed reaction is (6R)-5,10-methylene-5,6,7,8-tetrahydrofolate + NADP(+) = (6R)-5,10-methenyltetrahydrofolate + NADPH. It participates in one-carbon metabolism; tetrahydrofolate interconversion. In terms of biological role, bifunctional mitochondrial folate-interconverting enzyme that has both NAD/NADP-dependent methylenetetrahydrofolate dehydrogenase and methenyltetrahydrofolate cyclohydrolase activities. The chain is Bifunctional methylenetetrahydrofolate dehydrogenase/cyclohydrolase 2, mitochondrial from Homo sapiens (Human).